A 156-amino-acid polypeptide reads, in one-letter code: SsrA-binding protein (156 aa).

This sequence belongs to the SmpB family.

The protein resides in the cytoplasm. Functionally, required for rescue of stalled ribosomes mediated by trans-translation. Binds to transfer-messenger RNA (tmRNA), required for stable association of tmRNA with ribosomes. tmRNA and SmpB together mimic tRNA shape, replacing the anticodon stem-loop with SmpB. tmRNA is encoded by the ssrA gene; the 2 termini fold to resemble tRNA(Ala) and it encodes a 'tag peptide', a short internal open reading frame. During trans-translation Ala-aminoacylated tmRNA acts like a tRNA, entering the A-site of stalled ribosomes, displacing the stalled mRNA. The ribosome then switches to translate the ORF on the tmRNA; the nascent peptide is terminated with the 'tag peptide' encoded by the tmRNA and targeted for degradation. The ribosome is freed to recommence translation, which seems to be the essential function of trans-translation. This chain is SsrA-binding protein, found in Desulfitobacterium hafniense (strain DSM 10664 / DCB-2).